Here is a 110-residue protein sequence, read N- to C-terminus: DNA-directed RNA polymerase subunit omega (110 aa).

Belongs to the RNA polymerase subunit omega family. As to quaternary structure, the RNAP catalytic core consists of 2 alpha, 1 beta, 1 beta' and 1 omega subunit. When a sigma factor is associated with the core the holoenzyme is formed, which can initiate transcription.

The catalysed reaction is RNA(n) + a ribonucleoside 5'-triphosphate = RNA(n+1) + diphosphate. In terms of biological role, promotes RNA polymerase assembly. Latches the N- and C-terminal regions of the beta' subunit thereby facilitating its interaction with the beta and alpha subunits. This is DNA-directed RNA polymerase subunit omega from Mycobacterium leprae (strain Br4923).